A 67-amino-acid chain; its full sequence is Probable Sec-independent protein translocase protein TatE (67 aa).

Residues 1 to 21 (MEGISLAKLLIVGALIVLLFG) traverse the membrane as a helical segment. Positions 43-67 (MNDDSDATSKTASEDKNAGQAVHKE) are disordered. Basic and acidic residues predominate over residues 54–67 (ASEDKNAGQAVHKE).

It belongs to the TatA/E family. TatE subfamily.

Its subcellular location is the cell inner membrane. Functionally, part of the twin-arginine translocation (Tat) system that transports large folded proteins containing a characteristic twin-arginine motif in their signal peptide across membranes. TatE shares overlapping functions with TatA. This chain is Probable Sec-independent protein translocase protein TatE, found in Erwinia tasmaniensis (strain DSM 17950 / CFBP 7177 / CIP 109463 / NCPPB 4357 / Et1/99).